We begin with the raw amino-acid sequence, 381 residues long: Translation initiation factor eIF2B subunit beta (381 aa).

Positions 125 to 148 (LQKPEQPHQNRKNSSGSSSMKTKT) are disordered. Residues 136-145 (KNSSGSSSMK) are compositionally biased toward polar residues.

The protein belongs to the eIF-2B alpha/beta/delta subunits family. Component of the translation initiation factor 2B (eIF2B) complex which is a heterodecamer of two sets of five different subunits: alpha, beta, gamma, delta and epsilon. Subunits alpha, beta and delta comprise a regulatory subcomplex and subunits epsilon and gamma comprise a catalytic subcomplex. Within the complex, the hexameric regulatory complex resides at the center, with the two heterodimeric catalytic subcomplexes bound on opposite sides.

It localises to the cytoplasm. It is found in the cytosol. Its function is as follows. Acts as a component of the translation initiation factor 2B (eIF2B) complex, which catalyzes the exchange of GDP for GTP on the eukaryotic initiation factor 2 (eIF2) complex gamma subunit. Its guanine nucleotide exchange factor activity is repressed when bound to eIF2 complex phosphorylated on the alpha subunit, thereby limiting the amount of methionyl-initiator methionine tRNA available to the ribosome and consequently global translation is repressed. It activates the synthesis of GCN4 in yeast under amino acid starvation conditions by suppressing the inhibitory effects of multiple AUG codons present in the leader of GCN4 mRNA. It may promote either repression or activation of GCN4 expression depending on amino acid availability. GCD6 and GCD7 repress GCN4 expression at the translational level by ensuring that ribosomes which have translated UORF1 will reinitiate at UORF2, -3, or -4 and thus fail to reach the GCN4 start site. The polypeptide is Translation initiation factor eIF2B subunit beta (GCD7) (Saccharomyces cerevisiae (strain ATCC 204508 / S288c) (Baker's yeast)).